A 718-amino-acid polypeptide reads, in one-letter code: Pullulanase (718 aa).

The active-site Nucleophile is the D406. The Proton donor role is filled by E435.

This sequence belongs to the glycosyl hydrolase 13 family.

It carries out the reaction Hydrolysis of (1-&gt;6)-alpha-D-glucosidic linkages in pullulan, amylopectin and glycogen, and in the alpha- and beta-limit dextrins of amylopectin and glycogen.. This chain is Pullulanase (amyX), found in Bacillus subtilis (strain 168).